The sequence spans 489 residues: 3-octaprenyl-4-hydroxybenzoate carboxy-lyase (489 aa).

Asn172 serves as a coordination point for Mn(2+). Prenylated FMN-binding positions include 175 to 177, 189 to 191, and 194 to 195; these read IYR, RWL, and RG. Mn(2+) is bound at residue Glu238. The active-site Proton donor is Asp287.

The protein belongs to the UbiD family. As to quaternary structure, homohexamer. Prenylated FMN serves as cofactor. The cofactor is Mn(2+).

The protein resides in the cell membrane. The enzyme catalyses a 4-hydroxy-3-(all-trans-polyprenyl)benzoate + H(+) = a 2-(all-trans-polyprenyl)phenol + CO2. It participates in cofactor biosynthesis; ubiquinone biosynthesis. Functionally, catalyzes the decarboxylation of 3-octaprenyl-4-hydroxy benzoate to 2-octaprenylphenol, an intermediate step in ubiquinone biosynthesis. The sequence is that of 3-octaprenyl-4-hydroxybenzoate carboxy-lyase from Aeromonas salmonicida (strain A449).